The following is a 296-amino-acid chain: Acetylglutamate kinase (296 aa).

Substrate-binding positions include 67 to 68 (GG), arginine 89, and asparagine 194.

The protein belongs to the acetylglutamate kinase family. ArgB subfamily.

It is found in the cytoplasm. It carries out the reaction N-acetyl-L-glutamate + ATP = N-acetyl-L-glutamyl 5-phosphate + ADP. Its pathway is amino-acid biosynthesis; L-arginine biosynthesis; N(2)-acetyl-L-ornithine from L-glutamate: step 2/4. In terms of biological role, catalyzes the ATP-dependent phosphorylation of N-acetyl-L-glutamate. This is Acetylglutamate kinase from Brucella abortus (strain S19).